A 456-amino-acid polypeptide reads, in one-letter code: MPLIKTPPPHGGKLVERVVKKRDIAEKMIAGCPTYELKPTTLPDGTPIRHVYREIMSVCYGFFSPVEGSMVQNELERVLNERRLLSEWIFPYPILFDISEEDYKALDVKEGDRLLLMLKGQPFATLDIEEVYKIDPVDVATRTFGTPEKNPEVVREPFDDKHPGYVIYKMHNPIILAGKYTIVNEPKFKEPYDRFWFPPSKCREVIKNEKKWRTVIAHQTRNVPHVGHEMLMKCAAYTGDIEPCHGILVNAIIGAKRRGDYPDEAILEGHEAVNKYGYIKPERHMVTFTLWDMRYGNPIESLLHGVIRQNMGCTHHMFGRDHAAVGEYYDMYATQILWSQGIPSFGFEAPPNEVDYGLKIIPQNMAEFWYCPICQEIAYSENCGHTDAKQKFSGSFLRGMVAEGVFPPRVVMRPEVYKQIVKWWKVYNYPFVNRKYLELKNKELEIDLPAMEVPKA.

It belongs to the sulfate adenylyltransferase family.

It catalyses the reaction sulfate + ATP + H(+) = adenosine 5'-phosphosulfate + diphosphate. It functions in the pathway sulfur metabolism; hydrogen sulfide biosynthesis; sulfite from sulfate: step 1/3. This is Sulfate adenylyltransferase (sat) from Archaeoglobus fulgidus (strain ATCC 49558 / DSM 4304 / JCM 9628 / NBRC 100126 / VC-16).